The sequence spans 783 residues: BMP/retinoic acid-inducible neural-specific protein 2 (783 aa).

Residues 1-33 (MRWQCGTRFRGLRPVVAPWTALLALGLPGWVLA) form the signal peptide. Positions 85 to 281 (RYRIYREFAR…FVAAALSYIT (197 aa)) constitute an MACPF domain. N-linked (GlcNAc...) asparagine glycosylation is found at Asn-185, Asn-354, Asn-473, Asn-579, Asn-626, and Asn-658.

The protein belongs to the BRINP family.

Its subcellular location is the secreted. In terms of biological role, inhibits neuronal cell proliferation by negative regulation of the cell cycle transition. The sequence is that of BMP/retinoic acid-inducible neural-specific protein 2 (BRINP2) from Pongo abelii (Sumatran orangutan).